The following is a 140-amino-acid chain: Ribonuclease P protein component (140 aa).

It belongs to the RnpA family. In terms of assembly, consists of a catalytic RNA component (M1 or rnpB) and a protein subunit.

The catalysed reaction is Endonucleolytic cleavage of RNA, removing 5'-extranucleotides from tRNA precursor.. Functionally, RNaseP catalyzes the removal of the 5'-leader sequence from pre-tRNA to produce the mature 5'-terminus. It can also cleave other RNA substrates such as 4.5S RNA. The protein component plays an auxiliary but essential role in vivo by binding to the 5'-leader sequence and broadening the substrate specificity of the ribozyme. This Nostoc punctiforme (strain ATCC 29133 / PCC 73102) protein is Ribonuclease P protein component.